Consider the following 95-residue polypeptide: Co-chaperonin GroES (95 aa).

Residues Q36–V55 form a disordered region.

The protein belongs to the GroES chaperonin family. As to quaternary structure, heptamer of 7 subunits arranged in a ring. Interacts with the chaperonin GroEL.

The protein resides in the cytoplasm. Functionally, together with the chaperonin GroEL, plays an essential role in assisting protein folding. The GroEL-GroES system forms a nano-cage that allows encapsulation of the non-native substrate proteins and provides a physical environment optimized to promote and accelerate protein folding. GroES binds to the apical surface of the GroEL ring, thereby capping the opening of the GroEL channel. This Natranaerobius thermophilus (strain ATCC BAA-1301 / DSM 18059 / JW/NM-WN-LF) protein is Co-chaperonin GroES.